The following is a 606-amino-acid chain: Phosphomethylpyrimidine synthase (606 aa).

Residues 1–13 show a composition bias toward polar residues; it reads MTTADARTPASKQ. 2 disordered regions span residues 1 to 49 and 105 to 147; these read MTTA…SRPD and AGRP…DGRP. Positions 14-31 are enriched in low complexity; it reads NDGTPDGTTPDAGTPNDG. Basic and acidic residues predominate over residues 105–117; that stretch reads AGRPVRPEDDGLK. Residues N213, M242, Y271, H307, 327–329, 368–371, and E407 each bind substrate; these read SRG and DGLR. H411 lines the Zn(2+) pocket. Position 434 (Y434) interacts with substrate. H475 serves as a coordination point for Zn(2+). Positions 555, 558, and 563 each coordinate [4Fe-4S] cluster.

This sequence belongs to the ThiC family. [4Fe-4S] cluster is required as a cofactor.

It catalyses the reaction 5-amino-1-(5-phospho-beta-D-ribosyl)imidazole + S-adenosyl-L-methionine = 4-amino-2-methyl-5-(phosphooxymethyl)pyrimidine + CO + 5'-deoxyadenosine + formate + L-methionine + 3 H(+). It participates in cofactor biosynthesis; thiamine diphosphate biosynthesis. Its function is as follows. Catalyzes the synthesis of the hydroxymethylpyrimidine phosphate (HMP-P) moiety of thiamine from aminoimidazole ribotide (AIR) in a radical S-adenosyl-L-methionine (SAM)-dependent reaction. This Streptomyces griseus subsp. griseus (strain JCM 4626 / CBS 651.72 / NBRC 13350 / KCC S-0626 / ISP 5235) protein is Phosphomethylpyrimidine synthase.